A 360-amino-acid polypeptide reads, in one-letter code: Peptide chain release factor 1 (360 aa).

Q235 carries the post-translational modification N5-methylglutamine.

This sequence belongs to the prokaryotic/mitochondrial release factor family. Methylated by PrmC. Methylation increases the termination efficiency of RF1.

It localises to the cytoplasm. Its function is as follows. Peptide chain release factor 1 directs the termination of translation in response to the peptide chain termination codons UAG and UAA. This is Peptide chain release factor 1 from Burkholderia cenocepacia (strain ATCC BAA-245 / DSM 16553 / LMG 16656 / NCTC 13227 / J2315 / CF5610) (Burkholderia cepacia (strain J2315)).